The chain runs to 121 residues: Large ribosomal subunit protein bL19 (121 aa).

The protein belongs to the bacterial ribosomal protein bL19 family.

In terms of biological role, this protein is located at the 30S-50S ribosomal subunit interface and may play a role in the structure and function of the aminoacyl-tRNA binding site. The polypeptide is Large ribosomal subunit protein bL19 (rplS) (Borreliella burgdorferi (strain ATCC 35210 / DSM 4680 / CIP 102532 / B31) (Borrelia burgdorferi)).